The chain runs to 315 residues: Ribosomal RNA small subunit methyltransferase H (315 aa).

S-adenosyl-L-methionine-binding positions include 33 to 35 (AGH), Asp-53, Phe-80, Asp-101, and Gln-108.

This sequence belongs to the methyltransferase superfamily. RsmH family.

It is found in the cytoplasm. The catalysed reaction is cytidine(1402) in 16S rRNA + S-adenosyl-L-methionine = N(4)-methylcytidine(1402) in 16S rRNA + S-adenosyl-L-homocysteine + H(+). Functionally, specifically methylates the N4 position of cytidine in position 1402 (C1402) of 16S rRNA. In Natranaerobius thermophilus (strain ATCC BAA-1301 / DSM 18059 / JW/NM-WN-LF), this protein is Ribosomal RNA small subunit methyltransferase H.